The chain runs to 368 residues: Germination protease (368 aa).

Positions 1–16 (MEKKKLDLSQYAVRTD) are excised as a propeptide.

Belongs to the peptidase A25 family. In terms of assembly, homotetramer. Post-translationally, autoproteolytically processed. The inactive tetrameric zymogen termed p46 autoprocesses to a smaller form termed p41, which is active only during spore germination.

The enzyme catalyses Endopeptidase action with P4 Glu or Asp, P1 preferably Glu &gt; Asp, P1' hydrophobic and P2' Ala.. Functionally, initiates the rapid degradation of small, acid-soluble proteins during spore germination. The chain is Germination protease from Bacillus licheniformis (strain ATCC 14580 / DSM 13 / JCM 2505 / CCUG 7422 / NBRC 12200 / NCIMB 9375 / NCTC 10341 / NRRL NRS-1264 / Gibson 46).